The primary structure comprises 194 residues: NADH-quinone oxidoreductase subunit B (194 aa).

Residues 1–26 form a disordered region; that stretch reads MGLTPSATKPEIAQAPQGIVDPSTGR. [4Fe-4S] cluster-binding residues include Cys73, Cys74, Cys138, and Cys168.

The protein belongs to the complex I 20 kDa subunit family. In terms of assembly, NDH-1 is composed of 14 different subunits. Subunits NuoB, C, D, E, F, and G constitute the peripheral sector of the complex. [4Fe-4S] cluster is required as a cofactor.

It is found in the cell inner membrane. It carries out the reaction a quinone + NADH + 5 H(+)(in) = a quinol + NAD(+) + 4 H(+)(out). Its function is as follows. NDH-1 shuttles electrons from NADH, via FMN and iron-sulfur (Fe-S) centers, to quinones in the respiratory chain. The immediate electron acceptor for the enzyme in this species is believed to be ubiquinone. Couples the redox reaction to proton translocation (for every two electrons transferred, four hydrogen ions are translocated across the cytoplasmic membrane), and thus conserves the redox energy in a proton gradient. The protein is NADH-quinone oxidoreductase subunit B of Xanthobacter autotrophicus (strain ATCC BAA-1158 / Py2).